A 319-amino-acid chain; its full sequence is Non-homologous end joining protein Ku (319 aa).

The region spanning 10-188 (ISFGLVTVPI…PQGIELSEDE (179 aa)) is the Ku domain. The disordered stretch occupies residues 252–319 (QSVAKAKASR…TTPKKPRRSA (68 aa)). Basic and acidic residues predominate over residues 260-274 (SRGESGEADVHELPR). Positions 305–319 (TAAKKTTPKKPRRSA) are enriched in basic residues.

The protein belongs to the prokaryotic Ku family. In terms of assembly, homodimer. Interacts with LigD.

With LigD forms a non-homologous end joining (NHEJ) DNA repair enzyme, which repairs dsDNA breaks with reduced fidelity. Binds linear dsDNA with 5'- and 3'- overhangs but not closed circular dsDNA nor ssDNA. Recruits and stimulates the ligase activity of LigD. The chain is Non-homologous end joining protein Ku from Streptomyces avermitilis (strain ATCC 31267 / DSM 46492 / JCM 5070 / NBRC 14893 / NCIMB 12804 / NRRL 8165 / MA-4680).